We begin with the raw amino-acid sequence, 425 residues long: Glucose-1-phosphate adenylyltransferase (425 aa).

Residues Y114, G179, 194–195, and S212 each bind alpha-D-glucose 1-phosphate; that span reads EK.

Belongs to the bacterial/plant glucose-1-phosphate adenylyltransferase family. As to quaternary structure, homotetramer.

It catalyses the reaction alpha-D-glucose 1-phosphate + ATP + H(+) = ADP-alpha-D-glucose + diphosphate. The protein operates within glycan biosynthesis; glycogen biosynthesis. In terms of biological role, involved in the biosynthesis of ADP-glucose, a building block required for the elongation reactions to produce glycogen. Catalyzes the reaction between ATP and alpha-D-glucose 1-phosphate (G1P) to produce pyrophosphate and ADP-Glc. The chain is Glucose-1-phosphate adenylyltransferase from Pectobacterium carotovorum subsp. carotovorum (strain PC1).